Here is a 144-residue protein sequence, read N- to C-terminus: Deoxyuridine 5'-triphosphate nucleotidohydrolase (144 aa).

Substrate is bound by residues Arg63–Gly65, Asn76, and Thr80–Asp82.

This sequence belongs to the dUTPase family. It depends on Mg(2+) as a cofactor.

The catalysed reaction is dUTP + H2O = dUMP + diphosphate + H(+). Its pathway is pyrimidine metabolism; dUMP biosynthesis; dUMP from dCTP (dUTP route): step 2/2. In terms of biological role, this enzyme is involved in nucleotide metabolism: it produces dUMP, the immediate precursor of thymidine nucleotides and it decreases the intracellular concentration of dUTP so that uracil cannot be incorporated into DNA. This is Deoxyuridine 5'-triphosphate nucleotidohydrolase from Treponema denticola (strain ATCC 35405 / DSM 14222 / CIP 103919 / JCM 8153 / KCTC 15104).